A 279-amino-acid polypeptide reads, in one-letter code: 4-diphosphocytidyl-2-C-methyl-D-erythritol kinase (279 aa).

Lys-11 is a catalytic residue. 95-105 (PVAAGLGGGSS) lines the ATP pocket. Asp-137 is an active-site residue.

The protein belongs to the GHMP kinase family. IspE subfamily.

The catalysed reaction is 4-CDP-2-C-methyl-D-erythritol + ATP = 4-CDP-2-C-methyl-D-erythritol 2-phosphate + ADP + H(+). It participates in isoprenoid biosynthesis; isopentenyl diphosphate biosynthesis via DXP pathway; isopentenyl diphosphate from 1-deoxy-D-xylulose 5-phosphate: step 3/6. In terms of biological role, catalyzes the phosphorylation of the position 2 hydroxy group of 4-diphosphocytidyl-2C-methyl-D-erythritol. The chain is 4-diphosphocytidyl-2-C-methyl-D-erythritol kinase from Geobacter sulfurreducens (strain ATCC 51573 / DSM 12127 / PCA).